A 250-amino-acid polypeptide reads, in one-letter code: Ribonuclease PH (250 aa).

Phosphate is bound by residues R86 and 124-126; that span reads GTR.

Belongs to the RNase PH family. As to quaternary structure, homohexameric ring arranged as a trimer of dimers.

The catalysed reaction is tRNA(n+1) + phosphate = tRNA(n) + a ribonucleoside 5'-diphosphate. In terms of biological role, phosphorolytic 3'-5' exoribonuclease that plays an important role in tRNA 3'-end maturation. Removes nucleotide residues following the 3'-CCA terminus of tRNAs; can also add nucleotides to the ends of RNA molecules by using nucleoside diphosphates as substrates, but this may not be physiologically important. Probably plays a role in initiation of 16S rRNA degradation (leading to ribosome degradation) during starvation. This is Ribonuclease PH from Shouchella clausii (strain KSM-K16) (Alkalihalobacillus clausii).